Here is a 498-residue protein sequence, read N- to C-terminus: Glycerol kinase (498 aa).

Position 12 (threonine 12) interacts with ADP. ATP contacts are provided by threonine 12, threonine 13, and serine 14. Threonine 12 provides a ligand contact to sn-glycerol 3-phosphate. Arginine 16 serves as a coordination point for ADP. 3 residues coordinate sn-glycerol 3-phosphate: arginine 82, tyrosine 134, and aspartate 243. 4 residues coordinate glycerol: arginine 82, tyrosine 134, aspartate 243, and glutamine 244. ADP is bound by residues threonine 265 and glycine 308. Positions 265, 308, 312, and 411 each coordinate ATP. Glycine 411 contributes to the ADP binding site.

Belongs to the FGGY kinase family.

It carries out the reaction glycerol + ATP = sn-glycerol 3-phosphate + ADP + H(+). It participates in polyol metabolism; glycerol degradation via glycerol kinase pathway; sn-glycerol 3-phosphate from glycerol: step 1/1. Inhibited by fructose 1,6-bisphosphate (FBP). Its function is as follows. Key enzyme in the regulation of glycerol uptake and metabolism. Catalyzes the phosphorylation of glycerol to yield sn-glycerol 3-phosphate. The polypeptide is Glycerol kinase (Brucella suis (strain ATCC 23445 / NCTC 10510)).